The following is a 117-amino-acid chain: uncharacterized protein (117 aa).

Residues 1–20 form the signal peptide; that stretch reads MAAVHLYIISFTALMISSTS.

This is an uncharacterized protein from Saccharomyces cerevisiae (strain ATCC 204508 / S288c) (Baker's yeast).